Consider the following 168-residue polypeptide: MVRLLGIDPGLRFTGWGLVDVDGNRLCHVADGVIATDGDAPVPERLRCLHDSLLDLVRRYGPREAAVEETYVNRNGASTLKLGYARGVALLVPALAGIAVSEYGAMAVKRAVVGTGAASKDQVEMMVRRLLPGATIRRADASDALAVAICHAHHRASALRVSAGTRMA.

Catalysis depends on residues D8, E68, and D140. Mg(2+) is bound by residues D8, E68, and D140.

The protein belongs to the RuvC family. In terms of assembly, homodimer which binds Holliday junction (HJ) DNA. The HJ becomes 2-fold symmetrical on binding to RuvC with unstacked arms; it has a different conformation from HJ DNA in complex with RuvA. In the full resolvosome a probable DNA-RuvA(4)-RuvB(12)-RuvC(2) complex forms which resolves the HJ. It depends on Mg(2+) as a cofactor.

It is found in the cytoplasm. It carries out the reaction Endonucleolytic cleavage at a junction such as a reciprocal single-stranded crossover between two homologous DNA duplexes (Holliday junction).. Functionally, the RuvA-RuvB-RuvC complex processes Holliday junction (HJ) DNA during genetic recombination and DNA repair. Endonuclease that resolves HJ intermediates. Cleaves cruciform DNA by making single-stranded nicks across the HJ at symmetrical positions within the homologous arms, yielding a 5'-phosphate and a 3'-hydroxyl group; requires a central core of homology in the junction. The consensus cleavage sequence is 5'-(A/T)TT(C/G)-3'. Cleavage occurs on the 3'-side of the TT dinucleotide at the point of strand exchange. HJ branch migration catalyzed by RuvA-RuvB allows RuvC to scan DNA until it finds its consensus sequence, where it cleaves and resolves the cruciform DNA. This is Crossover junction endodeoxyribonuclease RuvC from Gluconacetobacter diazotrophicus (strain ATCC 49037 / DSM 5601 / CCUG 37298 / CIP 103539 / LMG 7603 / PAl5).